Consider the following 89-residue polypeptide: Large ribosomal subunit protein uL24 (89 aa).

The protein belongs to the universal ribosomal protein uL24 family. In terms of assembly, part of the 50S ribosomal subunit.

Its function is as follows. One of two assembly initiator proteins, it binds directly to the 5'-end of the 23S rRNA, where it nucleates assembly of the 50S subunit. In terms of biological role, one of the proteins that surrounds the polypeptide exit tunnel on the outside of the subunit. In Oenococcus oeni (strain ATCC BAA-331 / PSU-1), this protein is Large ribosomal subunit protein uL24.